Here is a 397-residue protein sequence, read N- to C-terminus: Acetate kinase (397 aa).

N7 provides a ligand contact to Mg(2+). K14 contributes to the ATP binding site. Residue R90 participates in substrate binding. D147 acts as the Proton donor/acceptor in catalysis. ATP-binding positions include 207-211, 282-284, and 330-334; these read HLGNG, DFR, and GLGEN. E383 is a binding site for Mg(2+).

Belongs to the acetokinase family. Homodimer. It depends on Mg(2+) as a cofactor. Requires Mn(2+) as cofactor.

It localises to the cytoplasm. It carries out the reaction acetate + ATP = acetyl phosphate + ADP. It participates in metabolic intermediate biosynthesis; acetyl-CoA biosynthesis; acetyl-CoA from acetate: step 1/2. Catalyzes the formation of acetyl phosphate from acetate and ATP. Can also catalyze the reverse reaction. This Clostridium botulinum (strain Langeland / NCTC 10281 / Type F) protein is Acetate kinase.